The sequence spans 856 residues: Inactive rhomboid protein 1 (856 aa).

The segment at 1–21 is disordered; sequence MGEARRDSSSSLQHKKPPWLK. At 1-412 the chain is on the cytoplasmic side; the sequence is MGEARRDSSS…HRPFFTYWLT (412 aa). Ser-76 and Ser-176 each carry phosphoserine. A phosphothreonine mark is found at Thr-180 and Thr-183. Ser-391 carries the post-translational modification Phosphoserine. The helical transmembrane segment at 413–433 threads the bilayer; the sequence is FVHSLVTILAVCIYGVAPVGF. Residues 434–656 lie on the Lumenal side of the membrane; the sequence is SQHETVDSVL…NPEVPDQFYR (223 aa). The N-linked (GlcNAc...) asparagine glycan is linked to Asn-584. Residues 657-677 form a helical membrane-spanning segment; sequence LWLSLFLHAGVLHCLVSVCFQ. Residues 678 to 692 are Cytoplasmic-facing; that stretch reads MTVLRDLEKLAGWHR. The chain crosses the membrane as a helical span at residues 693–713; it reads IAIIYLLSGVTGNLASAIFLP. At 714–715 the chain is on the lumenal side; the sequence is YR. A helical transmembrane segment spans residues 716-736; sequence AEVGPAGSQFGILACLFVELF. Over 737-747 the chain is Cytoplasmic; that stretch reads QSWQILARPWR. Residues 748–768 traverse the membrane as a helical segment; the sequence is AFFKLLAVVLFLFTFGLLPWI. Residues 769–773 lie on the Lumenal side of the membrane; sequence DNFAH. The helical transmembrane segment at 774–794 threads the bilayer; it reads ISGFISGLFLSFAFLPYISFG. Residues 795 to 804 lie on the Cytoplasmic side of the membrane; that stretch reads KFDLYRKRCQ. A helical transmembrane segment spans residues 805-825; that stretch reads IIVFQLVFLGLLAGLVVLFYF. Residues 826–856 are Lumenal-facing; the sequence is YPVRCEWCEFLTCIPFTDKFCEKYELDAQLH.

This sequence belongs to the peptidase S54 family. As to quaternary structure, homodimer, or homooligomer. Interacts with TGFA and HBEGF. Interacts with EGF; may retain EGF in the endoplasmic reticulum and regulates its degradation through the endoplasmic reticulum-associated degradation (ERAD). Interacts (via cytoplasmic N-terminus) with FRMD8/iTAP; this interaction leads to mutual protein stabilization. Interacts with ADAM17/TACE.

The protein resides in the endoplasmic reticulum membrane. It localises to the golgi apparatus membrane. Functionally, regulates ADAM17 protease, a sheddase of the epidermal growth factor (EGF) receptor ligands and TNF, thereby plays a role in sleep, cell survival, proliferation, migration and inflammation. Does not exhibit any protease activity on its own. In Bos taurus (Bovine), this protein is Inactive rhomboid protein 1 (RHBDF1).